We begin with the raw amino-acid sequence, 324 residues long: Malate dehydrogenase (324 aa).

NAD(+)-binding positions include 21–26 (GAGRVG) and aspartate 45. Residues arginine 94 and arginine 100 each contribute to the substrate site. NAD(+)-binding positions include asparagine 107 and 130–132 (VTN). The substrate site is built by asparagine 132 and arginine 163. Histidine 187 functions as the Proton acceptor in the catalytic mechanism.

This sequence belongs to the LDH/MDH superfamily. MDH type 3 family.

It catalyses the reaction (S)-malate + NAD(+) = oxaloacetate + NADH + H(+). Its function is as follows. Catalyzes the reversible oxidation of malate to oxaloacetate. The protein is Malate dehydrogenase of Trichormus variabilis (strain ATCC 29413 / PCC 7937) (Anabaena variabilis).